Consider the following 218-residue polypeptide: Keratin-associated protein 10-8 (218 aa).

The segment at 26-202 (CGNQVSSPSA…FCQPSCCHPA (177 aa)) is 16 X 5 AA repeats of C-C-X(3). 16 repeat units span residues 50–54 (CCEPT), 55–59 (CCAPS), 60–64 (CCAPA), 86–90 (CSSSS), 96–100 (CCVPV), 101–105 (CCRPV), 111–115 (CCRPV), 121–125 (CCTPV), 131–135 (CCRPV), 136–140 (CCRPV), 141–145 (CCRPV), 151–155 (CCRPM), 161–167 (PCSAPSS), 168–172 (CCRPS), 187–191 (CCVPT), and 198–202 (CCHPA).

This sequence belongs to the KRTAP type 10 family. As to quaternary structure, interacts with hair keratins.

In the hair cortex, hair keratin intermediate filaments are embedded in an interfilamentous matrix, consisting of hair keratin-associated proteins (KRTAP), which are essential for the formation of a rigid and resistant hair shaft through their extensive disulfide bond cross-linking with abundant cysteine residues of hair keratins. The matrix proteins include the high-sulfur and high-glycine-tyrosine keratins. This Bos taurus (Bovine) protein is Keratin-associated protein 10-8.